Reading from the N-terminus, the 180-residue chain is Isopentenyl-diphosphate Delta-isomerase (180 aa).

Mn(2+) is bound by residues His26 and His32. The Nudix hydrolase domain occupies 30 to 168 (ALHLAFSVLL…PELFTAWFPQ (139 aa)). Cys70 is a catalytic residue. Cys70 provides a ligand contact to Mg(2+). His72 serves as a coordination point for Mn(2+). Glu90 is a binding site for Mg(2+). The Mn(2+) site is built by Glu117 and Glu119. The active site involves Glu119.

This sequence belongs to the IPP isomerase type 1 family. Requires Mg(2+) as cofactor. It depends on Mn(2+) as a cofactor.

The protein localises to the cytoplasm. It catalyses the reaction isopentenyl diphosphate = dimethylallyl diphosphate. It participates in isoprenoid biosynthesis; dimethylallyl diphosphate biosynthesis; dimethylallyl diphosphate from isopentenyl diphosphate: step 1/1. Catalyzes the 1,3-allylic rearrangement of the homoallylic substrate isopentenyl (IPP) to its highly electrophilic allylic isomer, dimethylallyl diphosphate (DMAPP). The protein is Isopentenyl-diphosphate Delta-isomerase of Photobacterium profundum (strain SS9).